The sequence spans 334 residues: Phosphate acyltransferase (334 aa).

It belongs to the PlsX family. In terms of assembly, homodimer. Probably interacts with PlsY.

The protein resides in the cytoplasm. The catalysed reaction is a fatty acyl-[ACP] + phosphate = an acyl phosphate + holo-[ACP]. It participates in lipid metabolism; phospholipid metabolism. Functionally, catalyzes the reversible formation of acyl-phosphate (acyl-PO(4)) from acyl-[acyl-carrier-protein] (acyl-ACP). This enzyme utilizes acyl-ACP as fatty acyl donor, but not acyl-CoA. The sequence is that of Phosphate acyltransferase from Clostridium tetani (strain Massachusetts / E88).